Consider the following 437-residue polypeptide: 3-ketoacyl-CoA thiolase (437 aa).

Residue C99 is the Acyl-thioester intermediate of the active site. Active-site proton acceptor residues include H392 and C422.

It belongs to the thiolase-like superfamily. Thiolase family. In terms of assembly, heterotetramer of two alpha chains (FadJ) and two beta chains (FadI).

It localises to the cytoplasm. The catalysed reaction is an acyl-CoA + acetyl-CoA = a 3-oxoacyl-CoA + CoA. The protein operates within lipid metabolism; fatty acid beta-oxidation. In terms of biological role, catalyzes the final step of fatty acid oxidation in which acetyl-CoA is released and the CoA ester of a fatty acid two carbons shorter is formed. In Erwinia tasmaniensis (strain DSM 17950 / CFBP 7177 / CIP 109463 / NCPPB 4357 / Et1/99), this protein is 3-ketoacyl-CoA thiolase.